Here is a 548-residue protein sequence, read N- to C-terminus: C2H2-type transcription factor MSN2 (548 aa).

C2H2-type zinc fingers lie at residues 420–448 (FKCE…QDKP) and 449–471 (FECN…ARTH).

Interacts with HOG1/OSM1.

Its subcellular location is the nucleus. It localises to the cytoplasm. In terms of biological role, transcription factor that acts as a key downstream transcription factor in the HOG1-MAPK pathway. Regulates the expression of a series of downstream genes and controls vegetative growth, conidiogenesis, cell wall integrity, stress response, mitochondrial morphology, and pathogenicity. Binds to a putative promoter region 1500 bp upstream of the start codons of the target genes MGG_07019, POX1 and DCI1. Binds to the AGGGG and CCCCT motif of the COS1 promoter region. Involved in fatty acid beta-oxidation by directly regulating the expression of the dienoyl-CoA isomerase DCI1, thereby facilitating invasive hyphal growth during the early infection stage. Targets also the 3-methylglutaconyl-CoA hydratase-encoding gene (AUH1) to control mitochondrial morphology and mitophagy, which are critical for the infectious growth of the pathogen. This Pyricularia oryzae (strain 70-15 / ATCC MYA-4617 / FGSC 8958) (Rice blast fungus) protein is C2H2-type transcription factor MSN2.